A 408-amino-acid chain; its full sequence is Argininosuccinate synthase (408 aa).

ATP is bound by residues 8 to 16 (AYSGGLDTT) and Ala35. L-citrulline-binding residues include Tyr86 and Ser91. Position 116 (Gly116) interacts with ATP. Residues Thr118, Asn122, and Asp123 each coordinate L-aspartate. Asn122 provides a ligand contact to L-citrulline. L-citrulline is bound by residues Arg126, Ser177, Ser186, Glu263, and Tyr275.

Belongs to the argininosuccinate synthase family. Type 1 subfamily. Homotetramer.

The protein localises to the cytoplasm. It carries out the reaction L-citrulline + L-aspartate + ATP = 2-(N(omega)-L-arginino)succinate + AMP + diphosphate + H(+). It functions in the pathway amino-acid biosynthesis; L-arginine biosynthesis; L-arginine from L-ornithine and carbamoyl phosphate: step 2/3. The polypeptide is Argininosuccinate synthase (Lachnospira eligens (strain ATCC 27750 / DSM 3376 / VPI C15-48 / C15-B4) (Eubacterium eligens)).